Here is a 273-residue protein sequence, read N- to C-terminus: NADH-ubiquinone oxidoreductase 29.9 kDa subunit, mitochondrial (273 aa).

A mitochondrion-targeting transit peptide spans 1 to 8 (MRAALRLL).

The protein belongs to the complex I NDUFA5 subunit family. In terms of assembly, complex I is composed of about 40 different subunits.

It is found in the mitochondrion inner membrane. In terms of biological role, accessory subunit of the mitochondrial membrane respiratory chain NADH dehydrogenase (Complex I), that is believed not to be involved in catalysis. Complex I functions in the transfer of electrons from NADH to the respiratory chain. The immediate electron acceptor for the enzyme is believed to be ubiquinone. This chain is NADH-ubiquinone oxidoreductase 29.9 kDa subunit, mitochondrial (nuo-32), found in Neurospora crassa (strain ATCC 24698 / 74-OR23-1A / CBS 708.71 / DSM 1257 / FGSC 987).